Here is a 217-residue protein sequence, read N- to C-terminus: tRNA (guanine-N(7)-)-methyltransferase (217 aa).

4 residues coordinate S-adenosyl-L-methionine: Glu-48, Glu-73, Asn-100, and Asp-123. Residue Asp-123 is part of the active site. Substrate-binding residues include Lys-127 and Asp-159.

The protein belongs to the class I-like SAM-binding methyltransferase superfamily. TrmB family.

The enzyme catalyses guanosine(46) in tRNA + S-adenosyl-L-methionine = N(7)-methylguanosine(46) in tRNA + S-adenosyl-L-homocysteine. Its pathway is tRNA modification; N(7)-methylguanine-tRNA biosynthesis. Functionally, catalyzes the formation of N(7)-methylguanine at position 46 (m7G46) in tRNA. This is tRNA (guanine-N(7)-)-methyltransferase from Leptospira borgpetersenii serovar Hardjo-bovis (strain JB197).